We begin with the raw amino-acid sequence, 85 residues long: Large ribosomal subunit protein bL27 (85 aa).

The interval 1 to 21 (MAHKKAGGSTRNGRDSNAQRL) is disordered. The segment covering 9 to 19 (STRNGRDSNAQ) has biased composition (polar residues).

Belongs to the bacterial ribosomal protein bL27 family.

This is Large ribosomal subunit protein bL27 from Pectobacterium carotovorum subsp. carotovorum (strain PC1).